Here is an 864-residue protein sequence, read N- to C-terminus: Protein translocase subunit SecA (864 aa).

Residues Gln87, 105–109, and Asp494 each bind ATP; that span reads GEGKT. Residues 809-864 are disordered; the sequence is AKATELRHKEQPAELSYSGGDEDGAKTPSRRNAPKVGRNDPCPCGSGKKYKKCCGA. A compositionally biased stretch (basic and acidic residues) spans 810 to 820; sequence KATELRHKEQP. Zn(2+) is bound by residues Cys850, Cys852, Cys861, and Cys862.

It belongs to the SecA family. As to quaternary structure, monomer and homodimer. Part of the essential Sec protein translocation apparatus which comprises SecA, SecYEG and auxiliary proteins SecDF-YajC and YidC. Requires Zn(2+) as cofactor.

The protein localises to the cell inner membrane. It localises to the cytoplasm. It carries out the reaction ATP + H2O + cellular proteinSide 1 = ADP + phosphate + cellular proteinSide 2.. Part of the Sec protein translocase complex. Interacts with the SecYEG preprotein conducting channel. Has a central role in coupling the hydrolysis of ATP to the transfer of proteins into and across the cell membrane, serving as an ATP-driven molecular motor driving the stepwise translocation of polypeptide chains across the membrane. This Oleidesulfovibrio alaskensis (strain ATCC BAA-1058 / DSM 17464 / G20) (Desulfovibrio alaskensis) protein is Protein translocase subunit SecA.